A 482-amino-acid chain; its full sequence is MEGLCLNSFTRVLLLLFVFLVFSHKWQRVNAVEPVLELVKGFEAKPDSSIDSFQPLLTDSNGNFSFGFLRVNGSRLSLAVTHPNLTDPLWVLDPTRSASWSHKTKLFFNGSLVIIDPSSRLEWSTHTNGDRLILRNDSNLQVVKTSTFVEWESFDFPGNTLVESQNFTSAMALVSPNGLYSMRLGSDFIGLYAKVSEESQQFYWKHSALQAKAKVKDGAGPILARINPNGYLGMYQTGSIPIDVEAFNSFQRPVNGLLILRLESDGNLRGYLWDGSHWALNYEAIRETCDLPNPCGPYSLCTPGSGCSCIDNRTVIGECTHAASSPADFCDKTTEFKVVRRDGVEVPFKELMDHKTTSSLGECEEMCVDNCKCFGAVYNNGSGFCYLVNYPIRTMLGVADPSKLGYFKVREGVGKKKSRVGLTVGMSLLAVIALVLMVAMVYVGFRNWRREKRVLEEDNGLSPGPYKNLGSDSFNSVEMSRR.

An N-terminal signal peptide occupies residues 1–31 (MEGLCLNSFTRVLLLLFVFLVFSHKWQRVNA). The PAN domain occupies 330–411 (CDKTTEFKVV…SKLGYFKVRE (82 aa)). Disulfide bonds link Cys-363/Cys-385 and Cys-367/Cys-373. A helical transmembrane segment spans residues 425–445 (GMSLLAVIALVLMVAMVYVGF).

Its subcellular location is the membrane. The polypeptide is PAN domain-containing protein At5g03700 (Arabidopsis thaliana (Mouse-ear cress)).